The following is a 287-amino-acid chain: MSQSRAPAREPSETPSQREQIRSHMKMVIQQLEGILKELKDVAHELREVVGQIDKLTSDLELDLDADDWTVATASSTSSSERGLCEAFRLDFLGQDSLSDSWDFCSFLESSSRRSARDDTKPPPTTASVYSQMNGGLPVPNGPLIITPDSSSEEASSSTHSQSQKTSRTAGTRERVRFSDKILYHALCCDDDEDEDEDEDGRDEEEDKLDTDSERSPLAGSPVPPLPELYNCREPPAGGSHTIPRKDALNPGCRKKLLRNSSTQTVSDKSTQTLLPYVPAKHRNKDL.

The disordered stretch occupies residues 1-22 (MSQSRAPAREPSETPSQREQIR). Positions 25 to 58 (MKMVIQQLEGILKELKDVAHELREVVGQIDKLTS) form a coiled coil. Disordered stretches follow at residues 113-174 (RRSA…GTRE) and 189-287 (CDDD…NKDL). Low complexity predominate over residues 153-167 (EEASSSTHSQSQKTS). The segment covering 189–209 (CDDDEDEDEDEDGRDEEEDKL) has biased composition (acidic residues). Polar residues predominate over residues 259–274 (RNSSTQTVSDKSTQTL).

It belongs to the INSYN1 family.

The protein resides in the postsynaptic density. May be a component of the protein machinery at the inhibitory synapses, probably acting as a scaffold. This Danio rerio (Zebrafish) protein is Inhibitory synaptic factor 1.